The primary structure comprises 373 residues: MATSASSHLNKGIKQMYMSLPQGEKVQAMYIWVDGTGEGLRCKTRTLDCEPKCVEELPEWNFDGSSTFQSEGSNSDMYLHPVAMFRDPFRKDPNKLVLCEVFKYNRKPAETNLRHICKRIMDMVSNQHPWFGMEQEYTLMGTDGHPFGWPSNGFPGPQGPYYCGVGADKAYGRDIVEAHYRACLYAGVKITGTNAEVMPAQWEFQIGPCEGIRMGDHLWIARFILHRVCEDFGVIATFDPKPIPGNWNGAGCHTNFSTKAMREENGLKCIEEAIDKLSKRHQYHIRAYDPKGGLDNARRLTGFHETSNINDFSAGVANRGASIRIPRTVGQEKKGYFEDRRPSANCDPYAVTEAIVRTCLLNETGDEPFQYKN.

A2 carries the post-translational modification N-acetylalanine. The interval 2 to 25 (ATSASSHLNKGIKQMYMSLPQGEK) is required for glutamine-induced ubiquitination by CRL4(CRBN) and proteasomal degradation. N6-acetyllysine is present on residues K11 and K14. The GS beta-grasp domain occupies 24-106 (EKVQAMYIWV…VLCEVFKYNR (83 aa)). Y104 is subject to Phosphotyrosine. Residues 113-373 (LRHICKRIMD…TGDEPFQYKN (261 aa)) enclose the GS catalytic domain. E134 lines the ATP pocket. Mn(2+) is bound by residues E134, E136, E196, and E203. 203–208 (EFQIGP) contributes to the ATP binding site. Residue 246–247 (NW) participates in L-glutamate binding. H253 contacts Mn(2+). ATP-binding positions include 255 to 257 (NFS), R319, and R324. L-glutamate is bound at residue R319. Residue 336-338 (YFE) coordinates ADP. E338 is a Mn(2+) binding site. R340 lines the L-glutamate pocket. Residue S343 is modified to Phosphoserine.

This sequence belongs to the glutamine synthetase family. As to quaternary structure, decamer; composed of two pentamers. Interacts with PALMD. Interacts with RHOJ. Interacts with BEST2; this interaction tethers a fraction of GLUL to the membrane, causing a decrease of cytosolic glutamine synthase (GS) activity and inhibits the chloride channel activity of BEST2 by affecting the gating at the aperture in the absence of intracellular glutamate. It depends on Mg(2+) as a cofactor. Mn(2+) serves as cofactor. Post-translationally, acetylated by EP300/p300; acetylation is stimulated by increased glutamine levels and promotes ubiquitin-mediated proteasomal degradation. In terms of processing, palmitoylated; undergoes autopalmitoylation. Ubiquitinated by ZNRF1. Ubiquitinated by the DCX (DDB1-CUL4-X-box) E3 ubiquitin-protein ligase complex called CRL4(CRBN), leading to proteasomal degradation. In terms of tissue distribution, expressed in microvascular endothelial cells.

The protein localises to the cytoplasm. The protein resides in the cytosol. Its subcellular location is the microsome. It is found in the mitochondrion. It localises to the cell membrane. The enzyme catalyses L-glutamate + NH4(+) + ATP = L-glutamine + ADP + phosphate + H(+). The catalysed reaction is L-cysteinyl-[protein] + hexadecanoyl-CoA = S-hexadecanoyl-L-cysteinyl-[protein] + CoA. With respect to regulation, glutamine synthetase activity is inhibited by methionine sulfoximine (MSO). Glutamine synthetase that catalyzes the ATP-dependent conversion of glutamate and ammonia to glutamine. Its role depends on tissue localization: in the brain, it regulates the levels of toxic ammonia and converts neurotoxic glutamate to harmless glutamine, whereas in the liver, it is one of the enzymes responsible for the removal of ammonia. Plays a key role in ammonium detoxification during erythropoiesis: the glutamine synthetase activity is required to remove ammonium generated by porphobilinogen deaminase (HMBS) during heme biosynthesis to prevent ammonium accumulation and oxidative stress. Essential for proliferation of fetal skin fibroblasts. Independently of its glutamine synthetase activity, required for endothelial cell migration during vascular development. Involved in angiogenesis by regulating membrane localization and activation of the GTPase RHOJ, possibly by promoting RHOJ palmitoylation. May act as a palmitoyltransferase for RHOJ: able to autopalmitoylate and then transfer the palmitoyl group to RHOJ. Plays a role in ribosomal 40S subunit biogenesis. Through the interaction with BEST2, inhibits BEST2 channel activity by affecting the gating at the aperture in the absence of intracellular L-glutamate, but sensitizes BEST2 to intracellular L-glutamate, which promotes the opening of BEST2 and thus relieves its inhibitory effect on BEST2. The sequence is that of Glutamine synthetase from Mus musculus (Mouse).